A 333-amino-acid chain; its full sequence is L-asparagine oxygenase (333 aa).

The L-asparagine site is built by glutamate 125 and asparagine 146. Fe cation is bound by residues histidine 155 and glutamate 157. Positions 157 and 158 each coordinate L-asparagine. Histidine 287 is a binding site for Fe cation. Position 301 (arginine 301) interacts with 2-oxoglutarate. An L-asparagine-binding site is contributed by arginine 305.

Belongs to the clavaminate synthase family. Fe(2+) is required as a cofactor.

It carries out the reaction L-asparagine + 2-oxoglutarate + O2 = (2S,3S)-3-hydroxyasparagine + succinate + CO2. It functions in the pathway antibiotic biosynthesis; calcium-dependent antibiotic biosynthesis. Its function is as follows. Catalyzes the 3-hydroxylation of L-asparagine to (2S,3S)-3-hydroxyasparagine. The 3-hydroxylated asparagine produced is incorporated at position 9 during the biosynthesis of the non-ribosomally synthesized calcium-dependent antibiotic (CDA), a 11-residue acidic lipopeptide lactone. Is able to hydroxylate only free L-asparagine, since it hydroxylates neither a CDA analog with unmodified Asn at position 9 nor a peptidyl-carrier-protein (PCP)-bound asparagine. Is not active toward D-asparagine. The sequence is that of L-asparagine oxygenase (asnO) from Streptomyces coelicolor (strain ATCC BAA-471 / A3(2) / M145).